The sequence spans 144 residues: NADPH-dependent 7-cyano-7-deazaguanine reductase (144 aa).

Over residues 1–21 (MSQSPIQNPTSDPNAQSVQET) the composition is skewed to polar residues. A disordered region spans residues 1–27 (MSQSPIQNPTSDPNAQSVQETSESKYG). Cys-61 (thioimide intermediate) is an active-site residue. The active-site Proton donor is Asp-68. Residues 83-85 (VEL) and 102-103 (HE) each bind substrate.

It belongs to the GTP cyclohydrolase I family. QueF type 1 subfamily.

The protein localises to the cytoplasm. It catalyses the reaction 7-aminomethyl-7-carbaguanine + 2 NADP(+) = 7-cyano-7-deazaguanine + 2 NADPH + 3 H(+). Its pathway is tRNA modification; tRNA-queuosine biosynthesis. Functionally, catalyzes the NADPH-dependent reduction of 7-cyano-7-deazaguanine (preQ0) to 7-aminomethyl-7-deazaguanine (preQ1). This is NADPH-dependent 7-cyano-7-deazaguanine reductase from Acaryochloris marina (strain MBIC 11017).